Here is a 120-residue protein sequence, read N- to C-terminus: NAD(P)H-quinone oxidoreductase subunit 3, chloroplastic (120 aa).

3 helical membrane passes run 14-34 (LIISILIPILAFLISGILAPI), 64-84 (MFALVFVVFDVETVFLYPWAM), and 88-108 (VLGVSVFIEALIFVLILIVGS).

It belongs to the complex I subunit 3 family. NDH is composed of at least 16 different subunits, 5 of which are encoded in the nucleus.

It localises to the plastid. Its subcellular location is the chloroplast thylakoid membrane. It catalyses the reaction a plastoquinone + NADH + (n+1) H(+)(in) = a plastoquinol + NAD(+) + n H(+)(out). The enzyme catalyses a plastoquinone + NADPH + (n+1) H(+)(in) = a plastoquinol + NADP(+) + n H(+)(out). Its function is as follows. NDH shuttles electrons from NAD(P)H:plastoquinone, via FMN and iron-sulfur (Fe-S) centers, to quinones in the photosynthetic chain and possibly in a chloroplast respiratory chain. The immediate electron acceptor for the enzyme in this species is believed to be plastoquinone. Couples the redox reaction to proton translocation, and thus conserves the redox energy in a proton gradient. The protein is NAD(P)H-quinone oxidoreductase subunit 3, chloroplastic of Cicer arietinum (Chickpea).